A 219-amino-acid polypeptide reads, in one-letter code: Protein GrpE (219 aa).

Disordered stretches follow at residues 1–32 (MSTT…LDAT) and 59–87 (FDGV…AERT).

It belongs to the GrpE family. Homodimer.

The protein localises to the cytoplasm. Its function is as follows. Participates actively in the response to hyperosmotic and heat shock by preventing the aggregation of stress-denatured proteins, in association with DnaK and GrpE. It is the nucleotide exchange factor for DnaK and may function as a thermosensor. Unfolded proteins bind initially to DnaJ; upon interaction with the DnaJ-bound protein, DnaK hydrolyzes its bound ATP, resulting in the formation of a stable complex. GrpE releases ADP from DnaK; ATP binding to DnaK triggers the release of the substrate protein, thus completing the reaction cycle. Several rounds of ATP-dependent interactions between DnaJ, DnaK and GrpE are required for fully efficient folding. The protein is Protein GrpE of Corynebacterium diphtheriae (strain ATCC 700971 / NCTC 13129 / Biotype gravis).